Reading from the N-terminus, the 354-residue chain is Protein RecA (354 aa).

Position 75–82 (75–82 (GPESSGKT)) interacts with ATP.

This sequence belongs to the RecA family.

The protein localises to the cytoplasm. Can catalyze the hydrolysis of ATP in the presence of single-stranded DNA, the ATP-dependent uptake of single-stranded DNA by duplex DNA, and the ATP-dependent hybridization of homologous single-stranded DNAs. It interacts with LexA causing its activation and leading to its autocatalytic cleavage. The chain is Protein RecA from Cupriavidus taiwanensis (strain DSM 17343 / BCRC 17206 / CCUG 44338 / CIP 107171 / LMG 19424 / R1) (Ralstonia taiwanensis (strain LMG 19424)).